Here is a 262-residue protein sequence, read N- to C-terminus: Thiazole synthase (262 aa).

Residue Lys-105 is the Schiff-base intermediate with DXP of the active site. 1-deoxy-D-xylulose 5-phosphate-binding positions include Gly-166, 192-193, and 214-215; these read AG and NT.

The protein belongs to the ThiG family. Homotetramer. Forms heterodimers with either ThiH or ThiS.

The protein resides in the cytoplasm. It carries out the reaction [ThiS sulfur-carrier protein]-C-terminal-Gly-aminoethanethioate + 2-iminoacetate + 1-deoxy-D-xylulose 5-phosphate = [ThiS sulfur-carrier protein]-C-terminal Gly-Gly + 2-[(2R,5Z)-2-carboxy-4-methylthiazol-5(2H)-ylidene]ethyl phosphate + 2 H2O + H(+). It participates in cofactor biosynthesis; thiamine diphosphate biosynthesis. Its function is as follows. Catalyzes the rearrangement of 1-deoxy-D-xylulose 5-phosphate (DXP) to produce the thiazole phosphate moiety of thiamine. Sulfur is provided by the thiocarboxylate moiety of the carrier protein ThiS. In vitro, sulfur can be provided by H(2)S. This chain is Thiazole synthase, found in Phenylobacterium zucineum (strain HLK1).